We begin with the raw amino-acid sequence, 353 residues long: Putative glutamine synthetase (353 aa).

One can recognise a GS beta-grasp domain in the interval 19-102; it reads SIIEYVWIGG…VICDTYDVNG (84 aa). In terms of domain architecture, GS catalytic spans 109 to 353; that stretch reads HRHNANIIFE…IILQTVCESD (245 aa).

The protein belongs to the glutamine synthetase family.

The enzyme catalyses L-glutamate + NH4(+) + ATP = L-glutamine + ADP + phosphate + H(+). The polypeptide is Putative glutamine synthetase (Acanthamoeba polyphaga (Amoeba)).